We begin with the raw amino-acid sequence, 584 residues long: Long-chain-fatty-acid--AMP ligase FadD26 (584 aa).

Belongs to the ATP-dependent AMP-binding enzyme family.

The enzyme catalyses holo-[(phenol)carboxyphthiodiolenone synthase] + a long-chain fatty acid + ATP = a long-chain fatty acyl-[(phenol)carboxyphthiodiolenone synthase] + AMP + diphosphate. It carries out the reaction eicosanoate + holo-[(phenol)carboxyphthiodiolenone synthase] + ATP = icosanoyl-[(phenol)carboxyphthiodiolenone synthase] + AMP + diphosphate. It catalyses the reaction holo-[(phenol)carboxyphthiodiolenone synthase] + docosanoate + ATP = docosanoyl-[(phenol)carboxyphthiodiolenone synthase] + AMP + diphosphate. It participates in lipid metabolism; fatty acid biosynthesis. Its function is as follows. Catalyzes the activation of long-chain fatty acids as acyl-adenylates (acyl-AMP), which are then transferred to the multifunctional polyketide synthase PpsA for further chain extension. Catalyzes the adenylation of the long-chain fatty acids eicosanoate (C20) or docosanoate (C22), and potentially the very-long-chain fatty acid lignocerate (C24). Involved in the biosynthesis of phthiocerol dimycocerosate (DIM A) and phthiodiolone dimycocerosate (DIM B). The protein is Long-chain-fatty-acid--AMP ligase FadD26 of Mycobacterium marinum (strain ATCC BAA-535 / M).